We begin with the raw amino-acid sequence, 334 residues long: Trans-3-hydroxy-L-proline dehydratase (334 aa).

Cys91 (proton acceptor) is an active-site residue. Residues 92 to 93 (GH), Asp250, and 255 to 256 (GT) each bind substrate.

It belongs to the proline racemase family.

The enzyme catalyses trans-3-hydroxy-L-proline = 1-pyrroline-2-carboxylate + H2O. Its function is as follows. Catalyzes the dehydration of trans-3-hydroxy-L-proline (t3LHyp) to Delta(1)-pyrroline-2-carboxylate (Pyr2C). Is likely involved in a degradation pathway that converts t3LHyp to L-proline. Can also catalyze the epimerization of trans-4-hydroxy-L-proline (t4LHyp) to cis-4-hydroxy-D-proline (c4DHyp) in vitro. Displays no proline racemase activity. The sequence is that of Trans-3-hydroxy-L-proline dehydratase from Bacillus thuringiensis subsp. konkukian (strain 97-27).